We begin with the raw amino-acid sequence, 362 residues long: Terpene synthase 3 (362 aa).

Positions D90 to R95 match the DDxx(x)D/E motif motif. An NDxxSxxxD/E motif motif is present at residues N239–E247.

It belongs to the terpene synthase family.

It catalyses the reaction (2E,6E)-farnesyl diphosphate = beta-maaliene + diphosphate. It carries out the reaction (2E,6E)-farnesyl diphosphate = aristolene + diphosphate. The catalysed reaction is (2E,6E)-farnesyl diphosphate = calarene + diphosphate. The enzyme catalyses (2E)-geranyl diphosphate = (E)-beta-ocimene + diphosphate. It catalyses the reaction (2E)-geranyl diphosphate = (Z)-beta-ocimene + diphosphate. It carries out the reaction (2E)-geranyl diphosphate + H2O = linalool + diphosphate. The catalysed reaction is (2E)-geranyl diphosphate = beta-myrcene + diphosphate. Terpene synthase that converts its substrate farnesyl diphosphate (FPP) into an unidentified sesquiterpene as a major product, as well as beta-maaliene, aristolene, calarene and 2 additional unidentified sesquiterpene as minor products. Is also able to convert geranyl diphosphate (GPP) into a mixture of monoterpenes including (Z)-beta-ocimene, (E)-beta-ocimene, allo-ocimene, linalool and beta-myrcene. The sequence is that of Terpene synthase 3 from Dictyostelium discoideum (Social amoeba).